The sequence spans 357 residues: Trans-resveratrol di-O-methyltransferase (357 aa).

Residues glycine 200, aspartate 223, aspartate 243, methionine 244, and lysine 257 each contribute to the S-adenosyl-L-methionine site. The active-site Proton acceptor is histidine 261.

Belongs to the class I-like SAM-binding methyltransferase superfamily. Cation-independent O-methyltransferase family. COMT subfamily.

It carries out the reaction trans-resveratrol + 2 S-adenosyl-L-methionine = pterostilbene + 2 S-adenosyl-L-homocysteine + 2 H(+). Catalyzes the biosynthesis of pterostilbene from resveratrol. Pterostilbene has both antifungal and pharmacological properties. Also has activity toward resveratrol monomethyl ether (RME). This chain is Trans-resveratrol di-O-methyltransferase (ROMT), found in Vitis vinifera (Grape).